A 136-amino-acid polypeptide reads, in one-letter code: NADH-quinone oxidoreductase subunit A (136 aa).

Helical transmembrane passes span 20–40 (LAVY…VAWW), 70–90 (VPFY…AYIL), and 99–119 (LGWA…VGLV).

Belongs to the complex I subunit 3 family. In terms of assembly, NDH-1 is composed of 14 different subunits. Subunits NuoA, H, J, K, L, M, N constitute the membrane sector of the complex.

The protein localises to the cell inner membrane. It catalyses the reaction a quinone + NADH + 5 H(+)(in) = a quinol + NAD(+) + 4 H(+)(out). Its function is as follows. NDH-1 shuttles electrons from NADH, via FMN and iron-sulfur (Fe-S) centers, to quinones in the respiratory chain. The immediate electron acceptor for the enzyme in this species is believed to be ubiquinone. Couples the redox reaction to proton translocation (for every two electrons transferred, four hydrogen ions are translocated across the cytoplasmic membrane), and thus conserves the redox energy in a proton gradient. In Syntrophobacter fumaroxidans (strain DSM 10017 / MPOB), this protein is NADH-quinone oxidoreductase subunit A.